Reading from the N-terminus, the 253-residue chain is Probable transcriptional regulatory protein RBE_0568 (253 aa).

The interval 1–21 (MAGHSKFKNIQHRKGAQDKKR) is disordered.

Belongs to the TACO1 family.

It is found in the cytoplasm. The sequence is that of Probable transcriptional regulatory protein RBE_0568 from Rickettsia bellii (strain RML369-C).